Here is a 426-residue protein sequence, read N- to C-terminus: UPF0761 membrane protein Nmul_A0452 (426 aa).

Helical transmembrane passes span 48–68, 106–126, 145–165, 187–207, 217–237, and 255–275; these read LLSL…FPAF, LTAI…LTID, LLIY…SLSL, LLRL…YLIV, AIAG…GFAF, and IPIF…GAVI.

It belongs to the UPF0761 family.

The protein resides in the cell inner membrane. This chain is UPF0761 membrane protein Nmul_A0452, found in Nitrosospira multiformis (strain ATCC 25196 / NCIMB 11849 / C 71).